A 122-amino-acid polypeptide reads, in one-letter code: MIQLRSIINVADNSGARKVQCFKVRGGHHRDIATLGDVIMCSVRDAIPTSSIKKGDVVRAVVVRVAREKRRKDGSYIRFDENAVCIINENGEPKGTRVFGPIARELRDKNFLKIISLAPEVI.

Belongs to the universal ribosomal protein uL14 family. Part of the 50S ribosomal subunit. Forms a cluster with proteins L3 and L19. In the 70S ribosome, L14 and L19 interact and together make contacts with the 16S rRNA in bridges B5 and B8.

Binds to 23S rRNA. Forms part of two intersubunit bridges in the 70S ribosome. The chain is Large ribosomal subunit protein uL14 from Elusimicrobium minutum (strain Pei191).